Reading from the N-terminus, the 200-residue chain is Recombination protein RecR (200 aa).

The C4-type zinc finger occupies 57–72 (CNECRTFTEEDVCHIC). The Toprim domain occupies 81 to 176 (GLLCVVESPA…DASRIAHGVP (96 aa)).

Belongs to the RecR family.

Functionally, may play a role in DNA repair. It seems to be involved in an RecBC-independent recombinational process of DNA repair. It may act with RecF and RecO. The polypeptide is Recombination protein RecR (Vibrio vulnificus (strain CMCP6)).